Here is a 429-residue protein sequence, read N- to C-terminus: Mannose-6-phosphate isomerase (429 aa).

Ser2 bears the N-acetylserine mark. Position 107 is a phosphoserine (Ser107). Zn(2+) is bound by residues Gln109, His111, Glu136, and His281. The active site involves Arg300.

Belongs to the mannose-6-phosphate isomerase type 1 family. In terms of assembly, monomer. Zn(2+) is required as a cofactor.

The protein localises to the cytoplasm. It catalyses the reaction D-mannose 6-phosphate = D-fructose 6-phosphate. Its pathway is nucleotide-sugar biosynthesis; GDP-alpha-D-mannose biosynthesis; alpha-D-mannose 1-phosphate from D-fructose 6-phosphate: step 1/2. Its activity is regulated as follows. Can be inhibited by an excess of zinc. In terms of biological role, involved in the synthesis of the GDP-mannose and dolichol-phosphate-mannose required for a number of critical mannosyl transfer reactions. The sequence is that of Mannose-6-phosphate isomerase (PMI40) from Saccharomyces cerevisiae (strain ATCC 204508 / S288c) (Baker's yeast).